We begin with the raw amino-acid sequence, 225 residues long: UPF0758 protein Bpet3149 (225 aa).

The 123-residue stretch at alanine 103–leucine 225 folds into the MPN domain. 3 residues coordinate Zn(2+): histidine 174, histidine 176, and aspartate 187. Positions histidine 174–aspartate 187 match the JAMM motif motif.

It belongs to the UPF0758 family.

The protein is UPF0758 protein Bpet3149 of Bordetella petrii (strain ATCC BAA-461 / DSM 12804 / CCUG 43448).